The following is a 397-amino-acid chain: DnaJ homolog subfamily A member 4 (397 aa).

Positions 4–70 (ETQYYDILGV…RDVYDQGGEQ (67 aa)) constitute a J domain. Ser18 bears the Phosphoserine mark. The segment at 122–206 (GVTKKLALQK…CSGAKVIREK (85 aa)) adopts a CR-type zinc-finger fold. 8 residues coordinate Zn(2+): Cys135, Cys138, Cys151, Cys154, Cys178, Cys181, Cys194, and Cys197. 4 CXXCXGXG motif repeats span residues 135–142 (CEKCEGVG), 151–158 (CPLCKGRG), 178–185 (CIECKGQG), and 194–201 (CESCSGAK). Cys394 bears the Cysteine methyl ester mark. Cys394 carries the S-farnesyl cysteine lipid modification. The propeptide at 395-397 (QTA) is removed in mature form.

It is found in the membrane. This Homo sapiens (Human) protein is DnaJ homolog subfamily A member 4 (DNAJA4).